The following is a 281-amino-acid chain: UPF0162 protein PD_0709 (281 aa).

TPR repeat units lie at residues 193-226 (VRILRNLHSVYANTDRWDRAARCADRILKLVPNQ) and 227-260 (PEALRDRGLAYLQLGHRSGALNDLKRYLQLYPST).

Belongs to the UPF0162 family.

In Xylella fastidiosa (strain Temecula1 / ATCC 700964), this protein is UPF0162 protein PD_0709.